An 886-amino-acid chain; its full sequence is Alanine--tRNA ligase (886 aa).

4 residues coordinate Zn(2+): histidine 564, histidine 568, cysteine 666, and histidine 670.

It belongs to the class-II aminoacyl-tRNA synthetase family. The cofactor is Zn(2+).

It localises to the cytoplasm. It carries out the reaction tRNA(Ala) + L-alanine + ATP = L-alanyl-tRNA(Ala) + AMP + diphosphate. Its function is as follows. Catalyzes the attachment of alanine to tRNA(Ala) in a two-step reaction: alanine is first activated by ATP to form Ala-AMP and then transferred to the acceptor end of tRNA(Ala). Also edits incorrectly charged Ser-tRNA(Ala) and Gly-tRNA(Ala) via its editing domain. In Prochlorococcus marinus (strain MIT 9515), this protein is Alanine--tRNA ligase.